A 93-amino-acid polypeptide reads, in one-letter code: Small ribosomal subunit protein uS19 (93 aa).

It belongs to the universal ribosomal protein uS19 family.

Its function is as follows. Protein S19 forms a complex with S13 that binds strongly to the 16S ribosomal RNA. The protein is Small ribosomal subunit protein uS19 of Pseudarthrobacter chlorophenolicus (strain ATCC 700700 / DSM 12829 / CIP 107037 / JCM 12360 / KCTC 9906 / NCIMB 13794 / A6) (Arthrobacter chlorophenolicus).